The chain runs to 340 residues: Cysteinyl leukotriene receptor 1 (340 aa).

Topologically, residues 1 to 31 (MDETGNPTIPPASNNTCYDSIDDFRNQVYST) are extracellular. N14 carries an N-linked (GlcNAc...) asparagine glycan. A helical membrane pass occupies residues 32 to 52 (LYSMISVVGFFGNGFVLYVLV). The Cytoplasmic portion of the chain corresponds to 53–60 (KTYHEKSA). A helical membrane pass occupies residues 61–81 (FQVYMINLAVADLLCVCTLPL). The Extracellular portion of the chain corresponds to 82–109 (RVAYYVHKGIWLFGDFLCRLSTYALYVN). An intrachain disulfide couples C99 to C176. Residues 110-130 (LYCSIFFMTAMSFFRCVAIVF) form a helical membrane-spanning segment. Residues 131 to 144 (PVQNISLVTQKKAR) lie on the Cytoplasmic side of the membrane. The chain crosses the membrane as a helical span at residues 145–165 (LVCIAIWMFVILTSSPFLMAN). The Extracellular portion of the chain corresponds to 166–196 (TYKDEKNNTKCFEPPQDNQAKNYVLILHYVS). N-linked (GlcNAc...) asparagine glycosylation is present at N172. A helical transmembrane segment spans residues 197-217 (LFIGFIIPFITIIVCYTMIIF). At 218–233 (TLLKSSMKKNLSSRKR) the chain is on the cytoplasmic side. Residues 234–254 (AIGMIIVVTAAFLVSFMPYHI) form a helical membrane-spanning segment. Over 255–279 (QRTIHLHFLHNKTKPCDSILRMQKS) the chain is Extracellular. N265 carries an N-linked (GlcNAc...) asparagine glycan. A helical transmembrane segment spans residues 280–300 (VVITLSLAASNCCFDPLLYFF). Topologically, residues 301 to 340 (SGGNFRRRLSTIRKYSLSSMTYIPKKKTSLPQKGKDICKE) are cytoplasmic.

The protein belongs to the G-protein coupled receptor 1 family.

It localises to the cell membrane. Receptor for cysteinyl leukotrienes mediating bronchoconstriction of individuals with and without asthma. Stimulation by LTD4 results in the contraction and proliferation of smooth muscle, edema, eosinophil migration and damage to the mucus layer in the lung. This response is mediated via a G-protein that activates a phosphatidylinositol-calcium second messenger system. The protein is Cysteinyl leukotriene receptor 1 (CYSLTR1) of Cavia porcellus (Guinea pig).